Here is a 123-residue protein sequence, read N- to C-terminus: MGKKKSDTASGGAIPEGDNEKGKKIFKQRCEQCHVVNSLQTKTGPTLNGVIGRQSGQVAGFDYSAANKNKGVVWDRQTLFDYLADPKKYIPGTKMVFAGLKKADERADLIKFIEVEAAKKPSA.

Positions 1–21 are disordered; sequence MGKKKSDTASGGAIPEGDNEK. The heme c site is built by Cys-30, Cys-33, His-34, and Met-95.

This sequence belongs to the cytochrome c family. Binds 1 heme c group covalently per subunit.

It localises to the mitochondrion intermembrane space. In terms of biological role, electron carrier protein. The oxidized form of the cytochrome c heme group can accept an electron from the heme group of the cytochrome c1 subunit of cytochrome reductase. Cytochrome c then transfers this electron to the cytochrome oxidase complex, the final protein carrier in the mitochondrial electron-transport chain. The sequence is that of Probable cytochrome c 2.2 (cyc-2.2) from Caenorhabditis elegans.